We begin with the raw amino-acid sequence, 582 residues long: Proline--tRNA ligase (582 aa).

This sequence belongs to the class-II aminoacyl-tRNA synthetase family. ProS type 1 subfamily. In terms of assembly, homodimer.

It is found in the cytoplasm. It carries out the reaction tRNA(Pro) + L-proline + ATP = L-prolyl-tRNA(Pro) + AMP + diphosphate. Functionally, catalyzes the attachment of proline to tRNA(Pro) in a two-step reaction: proline is first activated by ATP to form Pro-AMP and then transferred to the acceptor end of tRNA(Pro). As ProRS can inadvertently accommodate and process non-cognate amino acids such as alanine and cysteine, to avoid such errors it has two additional distinct editing activities against alanine. One activity is designated as 'pretransfer' editing and involves the tRNA(Pro)-independent hydrolysis of activated Ala-AMP. The other activity is designated 'posttransfer' editing and involves deacylation of mischarged Ala-tRNA(Pro). The misacylated Cys-tRNA(Pro) is not edited by ProRS. This Mycobacterium ulcerans (strain Agy99) protein is Proline--tRNA ligase.